The sequence spans 152 residues: Lipoprotein signal peptidase (152 aa).

Helical transmembrane passes span 33–53, 58–78, and 83–102; these read VVPP…FGLL, MLFV…YFKI, and PVLD…NLAD. Residues D111 and D125 contribute to the active site. The helical transmembrane segment at 120–140 threads the bilayer; sequence VFNLADTAIVTGAFLLAWALL.

This sequence belongs to the peptidase A8 family.

The protein resides in the cell membrane. It carries out the reaction Release of signal peptides from bacterial membrane prolipoproteins. Hydrolyzes -Xaa-Yaa-Zaa-|-(S,diacylglyceryl)Cys-, in which Xaa is hydrophobic (preferably Leu), and Yaa (Ala or Ser) and Zaa (Gly or Ala) have small, neutral side chains.. It functions in the pathway protein modification; lipoprotein biosynthesis (signal peptide cleavage). In terms of biological role, this protein specifically catalyzes the removal of signal peptides from prolipoproteins. The chain is Lipoprotein signal peptidase from Pelotomaculum thermopropionicum (strain DSM 13744 / JCM 10971 / SI).